The following is a 595-amino-acid chain: Sorting nexin-9 (595 aa).

The region spanning 1 to 62 (MATKARVMYD…PTDYVEILPN (62 aa)) is the SH3 domain. Low complexity predominate over residues 89 to 100 (QTNSSSANSNNQ). The disordered stretch occupies residues 89-199 (QTNSSSANSN…QRGNSRAGAS (111 aa)). Phosphoserine is present on S121. The span at 129–144 (TDGTSAQRNSSANNWD) shows a compositional bias: polar residues. The span at 159 to 169 (GDDDEWDEDWD) shows a compositional bias: acidic residues. The residue at position 200 (S200) is a Phosphoserine. A critical for tubulation activity region spans residues 201-213 (MKLPLNKFPGFAK). Position 239 is a phosphotyrosine (Y239). The region spanning 250–360 (FDCVVADPRK…QQFLNFRDEK (111 aa)) is the PX domain. The a 1,2-diacyl-sn-glycero-3-phospho-(1D-myo-inositol-4,5-bisphosphate) site is built by R286, K288, and R327. K288 is modified (N6-acetyllysine). The 204-residue stretch at 392–595 (LIEIEQKCDA…RQALSRFPVM (204 aa)) folds into the BAR domain.

It belongs to the sorting nexin family. Homodimer, and homooligomer. Heterodimer with SNX18. Interacts with ITCH. Interacts (via SH3 domain) with TNK2, WASL and ACTR3. Identified in a complex with TNK2 and clathrin heavy chains. Identified in a complex with the AP-2 complex, clathrin and DNM2. Interacts (via SH3 domain) with DNM1 and DNM2. Identified in an oligomeric complex containing DNM1 and SNX9. Interacts with FCHSD1. Interacts with ADAM9 and ADAM15 cytoplasmic tails. Post-translationally, phosphorylated on tyrosine residues by TNK2. Phosphorylation promotes its activity in the degradation of EGFR. Ubiquitinated by ITCH. In terms of tissue distribution, detected in inner ear vestibula and in the cuticular plate of cochlear hair cells (at protein level).

The protein localises to the cytoplasmic vesicle membrane. It is found in the cell membrane. It localises to the cytoplasmic vesicle. The protein resides in the clathrin-coated vesicle. Its subcellular location is the golgi apparatus. The protein localises to the trans-Golgi network. It is found in the cell projection. It localises to the ruffle. The protein resides in the cytoplasm. Functionally, involved in endocytosis and intracellular vesicle trafficking, both during interphase and at the end of mitosis. Required for efficient progress through mitosis and cytokinesis. Required for normal formation of the cleavage furrow at the end of mitosis. Plays a role in endocytosis via clathrin-coated pits, but also clathrin-independent, actin-dependent fluid-phase endocytosis. Plays a role in macropinocytosis. Promotes internalization of TNFR. Promotes degradation of EGFR after EGF signaling. Stimulates the GTPase activity of DNM1. Promotes DNM1 oligomerization. Promotes activation of the Arp2/3 complex by WASL, and thereby plays a role in the reorganization of the F-actin cytoskeleton. Binds to membranes enriched in phosphatidylinositol 4,5-bisphosphate and promotes membrane tubulation. Has lower affinity for membranes enriched in phosphatidylinositol 3-phosphate. The chain is Sorting nexin-9 (Snx9) from Mus musculus (Mouse).